We begin with the raw amino-acid sequence, 397 residues long: MELLDSFIFISLVKAAVIFGVLMTTLAYLQWVERKVIAHIQVRPGPYRVGPHGLLQPLADVIKLITKEDLVPPYVNKPLYLAAPFLAITMALLSISVIPFGPVIHIGPVTTAMQMTDLNIGVLFILAVSSMGVYGIALAGWASNNKYSLIGGLRSSAQMISYELPMSLAIAAPLLISNTLSLRELVERQAGSILNWNLLSGPFPQVISFIIFIIAAFAETNRVPFDLPEAENELVAGFHTEYSSMKFASFFMAEYANMITVSAMATLLFLGGWMAPWPAAYGSSLVPSILFGISGLVLLYHGVNAVRKRDKLTFPAFGIIFLGIAGIFLLPMVQSWLLPLFWFCAKTGAILFAFMWIRGTLPRFRYDQLMGFTWKFLFPVAMLNLLVTGFLVAWTTK.

10 consecutive transmembrane segments (helical) span residues 7-27 (FIFI…TTLA), 84-104 (PFLA…GPVI), 120-140 (IGVL…ALAG), 156-176 (SAQM…PLLI), 198-218 (LLSG…AAFA), 258-278 (MITV…APWP), 279-299 (AAYG…LVLL), 313-333 (TFPA…LPMV), 337-357 (LLPL…FMWI), and 376-396 (FLFP…AWTT).

It belongs to the complex I subunit 1 family. As to quaternary structure, NDH-1 is composed of 14 different subunits. Subunits NuoA, H, J, K, L, M, N constitute the membrane sector of the complex.

Its subcellular location is the cell inner membrane. The catalysed reaction is a quinone + NADH + 5 H(+)(in) = a quinol + NAD(+) + 4 H(+)(out). Functionally, NDH-1 shuttles electrons from NADH, via FMN and iron-sulfur (Fe-S) centers, to quinones in the respiratory chain. The immediate electron acceptor for the enzyme in this species is believed to be ubiquinone. Couples the redox reaction to proton translocation (for every two electrons transferred, four hydrogen ions are translocated across the cytoplasmic membrane), and thus conserves the redox energy in a proton gradient. This subunit may bind ubiquinone. This chain is NADH-quinone oxidoreductase subunit H 1, found in Solibacter usitatus (strain Ellin6076).